The chain runs to 242 residues: MANFVLVHGAWHGGWCYRDTAAALRKAGHRVLTPTHTGVGQRAHLSGENVTLETHIRDVLGCIEAEELDDVILVGHSYGGMVITGVADRIAPKIRSLVYLDAFVPEHGDSLMALLPKALPPEVSAQFIGGFHAAALDKHCGLMQPIPAELFNVVADKRDWVNRRCVPQALATYEMPLLLAGGGSAVKQRVYILADGWDPSPFRYFAKLYDGKPGWQVVKFPCGHDVMVDMPNELAEKLAALG.

Residue Ser77 is the Acyl-ester intermediate of the active site.

This sequence belongs to the AB hydrolase superfamily.

Its subcellular location is the secreted. The enzyme catalyses carbendazim + H2O = 2-aminobenzimidazole + methanol + CO2. It catalyses the reaction carbendazim + H2O = N-(1H-1,3-benzodiazol-2-yl)carbamate + methanol + H(+). It carries out the reaction N-(1H-1,3-benzodiazol-2-yl)carbamate + H(+) = 2-aminobenzimidazole + CO2. Its function is as follows. Catalyzes the hydrolysis of the fungicide carbendazim (methyl-1H-benzimidazol-2-ylcarbamate or MBC) to 2-aminobenzimidazole (2-AB). Following hydrolysis of the carbamate ester, the carbamate decarboxylates spontaneously. Can hydrolyze model carboxylesters such as methyl salicylate, alpha-naphthyl acetate and p-nitrophenyl acetate. In addition, shows substantial hydrolytic activity in vitro against widespread pollutants with carboxylester, carbamate and amide linkages, such as dimethyl phthalate, propanil and chlorpropham. This Nocardioides sp. (strain SG-4G) protein is Carbendazim hydrolyzing esterase.